Reading from the N-terminus, the 147-residue chain is Proteinase inhibitor type-2 T (147 aa).

The first 25 residues, 1 to 25, serve as a signal peptide directing secretion; it reads MAVHKEVSFVAYLLIVLGMFLYVDA. Tandem repeats lie at residues 25-82 and 83-142. 8 cysteine pairs are disulfide-bonded: cysteine 28-cysteine 116, cysteine 32-cysteine 112, cysteine 40-cysteine 122, cysteine 52-cysteine 89, cysteine 55-cysteine 73, cysteine 56-cysteine 85, cysteine 62-cysteine 98, and cysteine 115-cysteine 133.

It belongs to the protease inhibitor I20 (potato type II proteinase inhibitor) family.

Inhibitor of trypsin and chymotrypsin. This chain is Proteinase inhibitor type-2 T (PIN2T), found in Solanum tuberosum (Potato).